A 378-amino-acid polypeptide reads, in one-letter code: MPNANQASAGVGALKEVLPGIRALGDLEAAEKVVKRCSGGSTVMVCVIGSTEISRVPGISAAGKTPESTFHTPAGDVELIYYDRIINAEEVPQNPVGAPSPAVITKAVVNLASIPFLTVDAGAAVKPACPYIDLGGEVARDFREGPALSEETYDRLLEFGKTLGKELTRDVDFLTVGESVPGGTTTAMAVMTALGYETSEKFASSSHDSPHDIKERVVKEGLEAQGVEPGDLDAHEAIRRFGDPMMPAVVGIIYGSRTPVLLAGGTQMAPILAYLAEEGQLDPERVFVGTTKYVVEDEDSDIESLFRQVGDYVLFSADPGFSESKFRGFRLYEEGYVKEGVGAGGAQVAAALKTKGEITPKDVLRECERVYERWMDKF.

This sequence belongs to the UPF0284 family.

This chain is UPF0284 protein MK0224, found in Methanopyrus kandleri (strain AV19 / DSM 6324 / JCM 9639 / NBRC 100938).